The following is a 531-amino-acid chain: 4-hydroxyphenylacetaldehyde oxime monooxygenase (531 aa).

A helical membrane pass occupies residues 18 to 38 (WQTCLLVLLPVLLVSYYLLTS). 4 residues coordinate heme b: Arg122, Arg151, Arg466, and Cys468.

The protein belongs to the cytochrome P450 family. Requires heme b as cofactor.

It localises to the endoplasmic reticulum membrane. It carries out the reaction (E)-4-hydroxyphenylacetaldehyde oxime + reduced [NADPH--hemoprotein reductase] + O2 = (S)-4-hydroxymandelonitrile + oxidized [NADPH--hemoprotein reductase] + 2 H2O + H(+). It catalyses the reaction (E)-4-hydroxyphenylacetaldehyde oxime = (Z)-(4-hydroxyphenyl)acetaldehyde oxime. The enzyme catalyses (Z)-(4-hydroxyphenyl)acetaldehyde oxime = 4-hydroxyphenylacetonitrile + H2O. The catalysed reaction is 4-hydroxyphenylacetonitrile + reduced [NADPH--hemoprotein reductase] + O2 = (S)-4-hydroxymandelonitrile + oxidized [NADPH--hemoprotein reductase] + H2O + H(+). The protein operates within secondary metabolite biosynthesis; dhurrin biosynthesis; dhurrin from L-tyrosine: step 2/3. Functionally, cytochrome P450 involved in the biosynthesis of the cyanogenic glucoside dhurrin. Catalyzes the conversion of p-hydroxyphenylacetaldoxime to p-hydroxymandelonitrile via three different and successive activities: isomerization of the (E) isomer to the (Z) isomer of p-hydroxyphenylacetaldoxime, followed by dehydration of the oxime to the corresponding nitrile, and C-hydroxylation of the nitrile to produce p-hydroxymandelonitrile. This chain is 4-hydroxyphenylacetaldehyde oxime monooxygenase, found in Sorghum bicolor (Sorghum).